Consider the following 221-residue polypeptide: DNA mismatch repair protein MutH (221 aa).

The protein belongs to the MutH family.

The protein localises to the cytoplasm. Sequence-specific endonuclease that cleaves unmethylated GATC sequences. It is involved in DNA mismatch repair. The protein is DNA mismatch repair protein MutH of Vibrio cholerae serotype O1 (strain ATCC 39315 / El Tor Inaba N16961).